The primary structure comprises 523 residues: Jerky protein homolog-like (523 aa).

The HTH psq-type domain occupies Met1–Ile52. DNA-binding regions (H-T-H motif) lie at residues Ser28–Asn48 and Pro100–Arg132. One can recognise an HTH CENPB-type domain in the interval Lys67–Asn139. The region spanning Leu168–Trp385 is the DDE-1 domain.

This sequence belongs to the tigger transposable element derived protein family.

It localises to the nucleus. The polypeptide is Jerky protein homolog-like (Jrkl) (Mus musculus (Mouse)).